Reading from the N-terminus, the 1081-residue chain is Probable sucrose-phosphate synthase 2 (1081 aa).

3 disordered regions span residues 116 to 152 (EQGR…PRGN), 239 to 267 (EPTE…EDLG), and 760 to 780 (IKRQ…GDVP). Residues 256 to 267 (EPEEEEEEEDLG) show a composition bias toward acidic residues.

Belongs to the glycosyltransferase 1 family. In terms of assembly, homodimer or homotetramer.

It catalyses the reaction beta-D-fructose 6-phosphate + UDP-alpha-D-glucose = sucrose 6(F)-phosphate + UDP + H(+). It participates in glycan biosynthesis; sucrose biosynthesis; sucrose from D-fructose 6-phosphate and UDP-alpha-D-glucose: step 1/2. Activity is regulated by phosphorylation and moderated by concentration of metabolites and light. Its function is as follows. Plays a role in photosynthetic sucrose synthesis by catalyzing the rate-limiting step of sucrose biosynthesis from UDP-glucose and fructose- 6-phosphate. Involved in the regulation of carbon partitioning in the leaves of plants. May regulate the synthesis of sucrose and therefore play a major role as a limiting factor in the export of photoassimilates out of the leaf. Plays a role for sucrose availability that is essential for plant growth and fiber elongation. The protein is Probable sucrose-phosphate synthase 2 (SPS2) of Craterostigma plantagineum (Blue gem).